The sequence spans 241 residues: Agamous-like MADS-box protein AP1 (241 aa).

In terms of domain architecture, MADS-box spans 1-61; sequence MGRGRVQLKR…GKLFEYSTDS (61 aa). In terms of domain architecture, K-box spans 88-178; sequence QGNWSLEYSK…AKEIKEKEKT (91 aa).

Expressed in tendrils and flowers.

The protein localises to the nucleus. In terms of biological role, probable transcription factor involved in flower development. This is Agamous-like MADS-box protein AP1 from Vitis vinifera (Grape).